Reading from the N-terminus, the 181-residue chain is Inner membrane-spanning protein YciB (181 aa).

5 helical membrane-spanning segments follow: residues 3-23, 49-69, 76-96, 119-139, and 149-169; these read FLFDLFPVILFFITFKIYGIY, TMLWVSLVLIVVFGSATLILQ, WKPSVLYWLFAAALLIAQAIF, VNASWAAFFAFMGAANLYVAF, and FKLFGFMGLMLVFVVLQGLML.

It belongs to the YciB family.

The protein localises to the cell inner membrane. Its function is as follows. Plays a role in cell envelope biogenesis, maintenance of cell envelope integrity and membrane homeostasis. The polypeptide is Inner membrane-spanning protein YciB (Nitrosospira multiformis (strain ATCC 25196 / NCIMB 11849 / C 71)).